Reading from the N-terminus, the 257-residue chain is Adenylate kinase (257 aa).

Residue 52–57 (GAGKGT) participates in ATP binding. An NMP region spans residues 72–101 (ATGDMLRSQVAKKTELGKEAKKIMDQGGLV). Residues threonine 73, arginine 78, 99 to 101 (GLV), 128 to 131 (GFPR), and glutamine 135 each bind AMP. Positions 169–206 (GRLVHPASGRSYHKIFNPPKNEMLDDITGEPLIQRSDD) are LID. ATP-binding positions include arginine 170 and 179 to 180 (SY). 2 residues coordinate AMP: arginine 203 and arginine 214. Glutamine 242 lines the ATP pocket.

The protein belongs to the adenylate kinase family. AK2 subfamily. As to quaternary structure, monomer.

Its subcellular location is the cytoplasm. It localises to the cytosol. The protein localises to the mitochondrion intermembrane space. It carries out the reaction AMP + ATP = 2 ADP. In terms of biological role, catalyzes the reversible transfer of the terminal phosphate group between ATP and AMP. Plays an important role in cellular energy homeostasis and in adenine nucleotide metabolism. Adenylate kinase activity is critical for regulation of the phosphate utilization and the AMP de novo biosynthesis pathways. The chain is Adenylate kinase (adk1) from Aspergillus clavatus (strain ATCC 1007 / CBS 513.65 / DSM 816 / NCTC 3887 / NRRL 1 / QM 1276 / 107).